Consider the following 344-residue polypeptide: MMVIRPVERSDVSALMQLASKTGGGLTSLPANEATLSVRIERAIKTWQGELPKSEQGYVFVLEDSETGTVAGICAIEVAVGLNDPWYNYRVGTLVHASKELNVYNALPTLFLSNDHTGSSELCTLFLDPKWRKEGNGYLLSKSRFMFMAAFRDKFNDKVVAEMRGVIDEHGYSPFWQSLGKRFFSMDFSRADFLCGTGQKAFIAELMPKHPIYTHFLSQEAQDVIGQVHPQTAPARAVLEKEGFRYRNYIDIFDGGPTLECDIDRVRAIRKSRLVEVAEGQPAQGDFPACLVANENYHHFRVVLVRTDPATERLILTAAQLDALKCHAGDRVRLVRLCAEEKTA.

Leu-125 serves as a coordination point for succinyl-CoA. His-229 serves as the catalytic Proton donor.

This sequence belongs to the arginine N-succinyltransferase family.

It carries out the reaction succinyl-CoA + L-arginine = N(2)-succinyl-L-arginine + CoA + H(+). It participates in amino-acid degradation; L-arginine degradation via AST pathway; L-glutamate and succinate from L-arginine: step 1/5. Its function is as follows. Catalyzes the transfer of succinyl-CoA to arginine to produce N(2)-succinylarginine. This chain is Arginine N-succinyltransferase, found in Escherichia coli O6:H1 (strain CFT073 / ATCC 700928 / UPEC).